A 231-amino-acid polypeptide reads, in one-letter code: Venom allergen 3 homolog (231 aa).

An N-terminal signal peptide occupies residues 1-21 (MSSCMLFFTVIIAGVFMGTIA). Disulfide bonds link Cys-25/Cys-40, Cys-30/Cys-124, and Cys-51/Cys-117. Positions 68-215 (VTLHNQLRRK…WNQQYLVCNY (148 aa)) constitute an SCP domain. Asn-145 carries an N-linked (GlcNAc...) asparagine glycan. The cysteines at positions 196 and 213 are disulfide-linked.

This sequence belongs to the CRISP family. Expressed by the venom gland.

It is found in the secreted. The chain is Venom allergen 3 homolog from Dinoponera quadriceps (South American ant).